A 463-amino-acid chain; its full sequence is Asparagine--tRNA ligase (463 aa).

It belongs to the class-II aminoacyl-tRNA synthetase family. As to quaternary structure, homodimer.

Its subcellular location is the cytoplasm. The enzyme catalyses tRNA(Asn) + L-asparagine + ATP = L-asparaginyl-tRNA(Asn) + AMP + diphosphate + H(+). This chain is Asparagine--tRNA ligase, found in Acholeplasma laidlawii (strain PG-8A).